Consider the following 457-residue polypeptide: Siroheme synthase (457 aa).

Residues 1–204 (MDHLPIFCQL…NDQKAITETT (204 aa)) form a precorrin-2 dehydrogenase /sirohydrochlorin ferrochelatase region. Residues 22 to 23 (DV) and 43 to 44 (LA) contribute to the NAD(+) site. Serine 128 is subject to Phosphoserine. The tract at residues 216–457 (GEVVLVGAGP…RDKLNWFSNH (242 aa)) is uroporphyrinogen-III C-methyltransferase. Proline 225 contacts S-adenosyl-L-methionine. The active-site Proton acceptor is the aspartate 248. Catalysis depends on lysine 270, which acts as the Proton donor. S-adenosyl-L-methionine is bound by residues 301-303 (GGD), isoleucine 306, 331-332 (TA), methionine 382, and glycine 411.

It in the N-terminal section; belongs to the precorrin-2 dehydrogenase / sirohydrochlorin ferrochelatase family. The protein in the C-terminal section; belongs to the precorrin methyltransferase family.

It catalyses the reaction uroporphyrinogen III + 2 S-adenosyl-L-methionine = precorrin-2 + 2 S-adenosyl-L-homocysteine + H(+). The enzyme catalyses precorrin-2 + NAD(+) = sirohydrochlorin + NADH + 2 H(+). The catalysed reaction is siroheme + 2 H(+) = sirohydrochlorin + Fe(2+). The protein operates within cofactor biosynthesis; adenosylcobalamin biosynthesis; precorrin-2 from uroporphyrinogen III: step 1/1. Its pathway is cofactor biosynthesis; adenosylcobalamin biosynthesis; sirohydrochlorin from precorrin-2: step 1/1. It participates in porphyrin-containing compound metabolism; siroheme biosynthesis; precorrin-2 from uroporphyrinogen III: step 1/1. It functions in the pathway porphyrin-containing compound metabolism; siroheme biosynthesis; siroheme from sirohydrochlorin: step 1/1. The protein operates within porphyrin-containing compound metabolism; siroheme biosynthesis; sirohydrochlorin from precorrin-2: step 1/1. Functionally, multifunctional enzyme that catalyzes the SAM-dependent methylations of uroporphyrinogen III at position C-2 and C-7 to form precorrin-2 via precorrin-1. Then it catalyzes the NAD-dependent ring dehydrogenation of precorrin-2 to yield sirohydrochlorin. Finally, it catalyzes the ferrochelation of sirohydrochlorin to yield siroheme. The protein is Siroheme synthase of Escherichia coli O6:H1 (strain CFT073 / ATCC 700928 / UPEC).